Consider the following 157-residue polypeptide: Transcription elongation factor GreA (157 aa).

A disordered region spans residues 1–60 (MEKVPMTSAGFAALGEELKKRQSEDRPRIIEHIAEARSHGDLSENAEYHAAKEEQSHNEG). Over residues 16-60 (EELKKRQSEDRPRIIEHIAEARSHGDLSENAEYHAAKEEQSHNEG) the composition is skewed to basic and acidic residues. Positions 46-73 (AEYHAAKEEQSHNEGRIAELEDKLARAD) form a coiled coil.

The protein belongs to the GreA/GreB family.

Its function is as follows. Necessary for efficient RNA polymerase transcription elongation past template-encoded arresting sites. The arresting sites in DNA have the property of trapping a certain fraction of elongating RNA polymerases that pass through, resulting in locked ternary complexes. Cleavage of the nascent transcript by cleavage factors such as GreA or GreB allows the resumption of elongation from the new 3'terminus. GreA releases sequences of 2 to 3 nucleotides. In Bradyrhizobium diazoefficiens (strain JCM 10833 / BCRC 13528 / IAM 13628 / NBRC 14792 / USDA 110), this protein is Transcription elongation factor GreA.